The primary structure comprises 572 residues: Butyrate--CoA ligase AAE11, peroxisomal (572 aa).

The Microbody targeting signal signature appears at 570–572; sequence SRL.

It belongs to the ATP-dependent AMP-binding enzyme family. As to expression, expressed in flowers.

The protein localises to the peroxisome. The catalysed reaction is a medium-chain fatty acid + ATP + CoA = a medium-chain fatty acyl-CoA + AMP + diphosphate. Butyrate--CoA ligase that is active in vitro with medium-chain fatty acids, with a preference for hexanoate and octanoate. The chain is Butyrate--CoA ligase AAE11, peroxisomal (AAE11) from Arabidopsis thaliana (Mouse-ear cress).